Reading from the N-terminus, the 271-residue chain is Magnesium dechelatase SGR2, chloroplastic (271 aa).

The transit peptide at 1–54 (MCSLATNLLLPSKMKPVFPEKLSTSSLCVTTRRSKMKNRSIVPVARLFGPAIFE) directs the protein to the chloroplast.

The protein belongs to the staygreen family. As to quaternary structure, interacts with the light harvesting complex II (LHCII). Interacts with the chlorophyll catabolic enzyme (CCE) RCCR.

Its subcellular location is the plastid. It localises to the chloroplast thylakoid membrane. The catalysed reaction is chlorophyll a + 2 H(+) = pheophytin a + Mg(2+). Functionally, magnesium chelatase involved in chlorophyll a degradation in the chlorophyll-protein complexes of photosystem I (PSI) and photosystem II (PSII). Contributes to the degradation of PSI and PSII in the thylakoid membranes. Required to trigger chlorophyll degradation during natural and dark-induced leaf senescence. Mediates chlorophyll degradation during embryo degreening. Recombinant SGR2 possesses high dechelating activity against chlorophyll a, very low activity against chlorophyllide a, and no activity against chlorophyll b. This Arabidopsis thaliana (Mouse-ear cress) protein is Magnesium dechelatase SGR2, chloroplastic.